We begin with the raw amino-acid sequence, 978 residues long: Glycine dehydrogenase (decarboxylating) (978 aa).

N6-(pyridoxal phosphate)lysine is present on Lys726.

Belongs to the GcvP family. In terms of assembly, the glycine cleavage system is composed of four proteins: P, T, L and H. Requires pyridoxal 5'-phosphate as cofactor.

It carries out the reaction N(6)-[(R)-lipoyl]-L-lysyl-[glycine-cleavage complex H protein] + glycine + H(+) = N(6)-[(R)-S(8)-aminomethyldihydrolipoyl]-L-lysyl-[glycine-cleavage complex H protein] + CO2. Its function is as follows. The glycine cleavage system catalyzes the degradation of glycine. The P protein binds the alpha-amino group of glycine through its pyridoxal phosphate cofactor; CO(2) is released and the remaining methylamine moiety is then transferred to the lipoamide cofactor of the H protein. The protein is Glycine dehydrogenase (decarboxylating) of Paraburkholderia xenovorans (strain LB400).